The sequence spans 337 residues: Histidine N-acetyltransferase (337 aa).

The propeptide at 1–2 (MK) is removed in mature form. Residues 21-156 (LQFAVATEED…QGILLVRFRA (136 aa)) form the N-acetyltransferase domain.

It carries out the reaction L-histidine + acetyl-CoA = N(alpha)-acetyl-L-histidine + CoA + H(+). Functionally, enzyme responsible for the N-acetyl-histidine (NAH) synthesis, which is a major constituent of brain and lens of ectothermic vertebrates. In Scomber australasicus (Blue mackerel), this protein is Histidine N-acetyltransferase (hisat).